Consider the following 93-residue polypeptide: Small hydrophobic protein (93 aa).

The next 2 membrane-spanning stretches (helical) occupy residues 5 to 25 and 32 to 52; these read LIIIGAAFLVGPRTFKFVLAY and AFGPPLQIVQFMVWLIIIYFP.

The protein localises to the membrane. The sequence is that of Small hydrophobic protein from Tupaia virus (isolate Tupaia/Thailand/-/1986) (TUPV).